A 426-amino-acid polypeptide reads, in one-letter code: Serine--tRNA ligase (426 aa).

L-serine is bound at residue T233–E235. R264–E266 lines the ATP pocket. E287 is an L-serine binding site. ATP is bound at residue E351–S354. Position 387 (S387) interacts with L-serine.

Belongs to the class-II aminoacyl-tRNA synthetase family. Type-1 seryl-tRNA synthetase subfamily. Homodimer. The tRNA molecule binds across the dimer.

It localises to the cytoplasm. It carries out the reaction tRNA(Ser) + L-serine + ATP = L-seryl-tRNA(Ser) + AMP + diphosphate + H(+). It catalyses the reaction tRNA(Sec) + L-serine + ATP = L-seryl-tRNA(Sec) + AMP + diphosphate + H(+). It functions in the pathway aminoacyl-tRNA biosynthesis; selenocysteinyl-tRNA(Sec) biosynthesis; L-seryl-tRNA(Sec) from L-serine and tRNA(Sec): step 1/1. Functionally, catalyzes the attachment of serine to tRNA(Ser). Is also able to aminoacylate tRNA(Sec) with serine, to form the misacylated tRNA L-seryl-tRNA(Sec), which will be further converted into selenocysteinyl-tRNA(Sec). The chain is Serine--tRNA ligase from Xylella fastidiosa (strain M12).